We begin with the raw amino-acid sequence, 318 residues long: Pantothenate kinase (318 aa).

Position 96 to 103 (96 to 103 (GSVAVGKS)) interacts with ATP.

This sequence belongs to the prokaryotic pantothenate kinase family.

The protein resides in the cytoplasm. It carries out the reaction (R)-pantothenate + ATP = (R)-4'-phosphopantothenate + ADP + H(+). The protein operates within cofactor biosynthesis; coenzyme A biosynthesis; CoA from (R)-pantothenate: step 1/5. The polypeptide is Pantothenate kinase (Coxiella burnetii (strain CbuK_Q154) (Coxiella burnetii (strain Q154))).